The chain runs to 182 residues: Large ribosomal subunit protein uL5m (182 aa).

Belongs to the universal ribosomal protein uL5 family.

It is found in the mitochondrion. This chain is Large ribosomal subunit protein uL5m (RPL5), found in Reclinomonas americana.